We begin with the raw amino-acid sequence, 499 residues long: ATP synthase subunit alpha, chloroplastic (499 aa).

G170 to T177 lines the ATP pocket.

This sequence belongs to the ATPase alpha/beta chains family. In terms of assembly, F-type ATPases have 2 components, CF(1) - the catalytic core - and CF(0) - the membrane proton channel. CF(1) has five subunits: alpha(3), beta(3), gamma(1), delta(1), epsilon(1). CF(0) has four main subunits: a, b, b' and c.

It is found in the plastid. The protein localises to the chloroplast thylakoid membrane. The catalysed reaction is ATP + H2O + 4 H(+)(in) = ADP + phosphate + 5 H(+)(out). Its function is as follows. Produces ATP from ADP in the presence of a proton gradient across the membrane. The alpha chain is a regulatory subunit. The polypeptide is ATP synthase subunit alpha, chloroplastic (Emiliania huxleyi (Coccolithophore)).